Consider the following 324-residue polypeptide: tRNA pseudouridine synthase B (324 aa).

H43 serves as a coordination point for substrate. The active-site Nucleophile is the D48. The substrate site is built by Y76, Y179, and L200.

This sequence belongs to the pseudouridine synthase TruB family. Type 1 subfamily.

It catalyses the reaction uridine(55) in tRNA = pseudouridine(55) in tRNA. Responsible for synthesis of pseudouridine from uracil-55 in the psi GC loop of transfer RNAs. This is tRNA pseudouridine synthase B from Yersinia pestis bv. Antiqua (strain Nepal516).